Here is a 465-residue protein sequence, read N- to C-terminus: MDTPNNRGINIRFVTNKKVLWPEDVAAKLFSQYQTMLATKLYTKDMEIVEILSGTTPFKGVYTLEQIKSKIKNQKHSLSMKNLALQKTSQQIDSSPPQTPTTSNGSMMTRRQNANNAISSNNNTNTNVTNGSSSNTSLNGGDEEQEEEEEEENDEDSITNKEDSDSYDDFSIVEETTDIREVQDTRSFKKVKLNSLTSLNEGYIVPPTPQIEMVSPNRNNNNNNINKNNNNNINNNNNNNNNIFNFLQDQDQNQNKPNKPNNQSNFSNQSQQLQNLINATANENKKLKLSMEQLEFQLKMEKEQNLKLKNLVTKLNEEIQLEKEISKQINKSICSNLNIQNSRSISTNSVIFKKDSNDDSIVAIFPTFITTTNSNSSEITLTIDPNPPENYHKIIIKQQLHQHHQHQQQQQQQQPQIQTYLIKKLQDYYDPEPCLIGSTNSKGVYFKSKDKSLLKISIDNLRDFD.

Residues 87 to 112 (KTSQQIDSSPPQTPTTSNGSMMTRRQ) show a composition bias toward polar residues. Disordered regions lie at residues 87 to 169 (KTSQ…SYDD) and 201 to 244 (EGYI…NNIF). The segment covering 113–139 (NANNAISSNNNTNTNVTNGSSSNTSLN) has biased composition (low complexity). A compositionally biased stretch (acidic residues) spans 141–157 (GDEEQEEEEEEENDEDS). Over residues 217–244 (NRNNNNNNINKNNNNNINNNNNNNNNIF) the composition is skewed to low complexity.

This is an uncharacterized protein from Dictyostelium discoideum (Social amoeba).